The chain runs to 61 residues: Protein translocase subunit SecE (61 aa).

Residues 39-59 traverse the membrane as a helical segment; sequence LGILVIGLVGMLIRIIGILML.

Belongs to the SecE/SEC61-gamma family. As to quaternary structure, component of the Sec protein translocase complex. Heterotrimer consisting of SecY (alpha), SecG (beta) and SecE (gamma) subunits. The heterotrimers can form oligomers, although 1 heterotrimer is thought to be able to translocate proteins. Interacts with the ribosome. May interact with SecDF, and other proteins may be involved.

It is found in the cell membrane. Functionally, essential subunit of the Sec protein translocation channel SecYEG. Clamps together the 2 halves of SecY. May contact the channel plug during translocation. The sequence is that of Protein translocase subunit SecE from Pyrococcus horikoshii (strain ATCC 700860 / DSM 12428 / JCM 9974 / NBRC 100139 / OT-3).